Consider the following 403-residue polypeptide: Ribosomal RNA large subunit methyltransferase I (403 aa).

Positions 9–86 constitute a PUA domain; it reads YPRLVLSKGR…KAESIDIAFF (78 aa).

The protein belongs to the methyltransferase superfamily. RlmI family.

Its subcellular location is the cytoplasm. It carries out the reaction cytidine(1962) in 23S rRNA + S-adenosyl-L-methionine = 5-methylcytidine(1962) in 23S rRNA + S-adenosyl-L-homocysteine + H(+). In terms of biological role, specifically methylates the cytosine at position 1962 (m5C1962) of 23S rRNA. The protein is Ribosomal RNA large subunit methyltransferase I of Salmonella gallinarum (strain 287/91 / NCTC 13346).